A 152-amino-acid chain; its full sequence is UPF0266 membrane protein plu2700 (152 aa).

The next 3 membrane-spanning stretches (helical) occupy residues 6–26, 45–65, and 67–87; these read IALTGLIVLMLAFAVYDEFVV, IDALIFIILILIVVYNNITVY, and SRLTTYLLLFTILVTIYIAYI.

The protein belongs to the UPF0266 family.

Its subcellular location is the cell inner membrane. In Photorhabdus laumondii subsp. laumondii (strain DSM 15139 / CIP 105565 / TT01) (Photorhabdus luminescens subsp. laumondii), this protein is UPF0266 membrane protein plu2700.